Here is a 326-residue protein sequence, read N- to C-terminus: MAEVTATVALTRADVVPSRKRVKLPAWLEVAKPRLIPLLLATTLGGMALTEGWPLSSPRLICTLGGGALASAAAGVLNCLWEQDLDGRMNRTSGRALPSGRLSPTTAFIGAIACTLVAAMLLVSGVNCLAAGLSLLGLCSYVLLYTALLKPRTTQNIVVGGVAGAIPPLVGAAAATGHIGLGGWWLFALVMVWTPAHFWALALLLREDYRAVGIPMLPVVKGPVVTARAISRYGWATVLLSGFGILALPTGGLFYGLMLLPYNNRLLQLVHRLAADPDSLTNAKSLFRWSILYLFGICLLLILSRSALAAHLDQQMIAMLMQLSVA.

8 helical membrane-spanning segments follow: residues L35–L55, L60–L80, T106–V126, L129–L149, I157–G177, W185–L205, V238–M258, and W289–A309.

Belongs to the UbiA prenyltransferase family. Protoheme IX farnesyltransferase subfamily.

It localises to the cell inner membrane. The enzyme catalyses heme b + (2E,6E)-farnesyl diphosphate + H2O = Fe(II)-heme o + diphosphate. The protein operates within porphyrin-containing compound metabolism; heme O biosynthesis; heme O from protoheme: step 1/1. In terms of biological role, converts heme B (protoheme IX) to heme O by substitution of the vinyl group on carbon 2 of heme B porphyrin ring with a hydroxyethyl farnesyl side group. The sequence is that of Protoheme IX farnesyltransferase from Synechococcus sp. (strain CC9902).